The following is a 632-amino-acid chain: Cleavage stimulation factor subunit 2 tau variant (632 aa).

The RRM domain maps to 16–94 (RSVFVGNIPY…RALRVDNAAS (79 aa)). Disordered regions lie at residues 201 to 296 (IPGK…PGGA) and 365 to 433 (YMGP…TRPM). Over residues 213-233 (PGGPGPSGPGGPGPGPAPGLC) the composition is skewed to pro residues. Positions 234 to 244 (PGPNVMLNQQN) are enriched in low complexity. Residues 275 to 287 (APGPIPAAVPGPG) show a composition bias toward pro residues. A compositionally biased stretch (low complexity) spans 365–375 (YMGPPHQGPPM). Basic and acidic residues-rich tracts occupy residues 377 to 390 (HGHDNRGPASHDMR) and 420 to 433 (RGGRESRGMETRPM). The 1-1; approximate repeat unit spans residues 428–432 (METRP). Positions 428–466 (METRPMETEVLEPRGMERRMETCAMETRGMDARGLEMRG) are 8 X 5 AA tandem repeats of M-E-T-R-[AG]. The stretch at 433–437 (METEV) is one 1-2; approximate repeat. Residues 438-442 (LEPRG) form a 1-3; approximate repeat. A 1-4; approximate repeat occupies 443–446 (MERR). The stretch at 447–451 (METCA) is one 1-5; approximate repeat. Residues 452–456 (METRG) form a 1-6 repeat. The stretch at 457–461 (MDARG) is one 1-7; approximate repeat. The 1-8; approximate repeat unit spans residues 462–466 (LEMRG). Residues 508–512 (GGTMQ) form a 2-1; approximate repeat. Residues 508-565 (GGTMQGAGIQGGGMQGAGMQGGGMQGAGMQGGGMQGAGMQAGMQGASMQGGMQGAGMQ) are 12 X 5 AA tandem repeats of G-[AT]-G-[MI]-Q. A 2-2 repeat occupies 513 to 517 (GAGIQ). Residues 518–522 (GGGMQ) form a 2-3; approximate repeat. A compositionally biased stretch (gly residues) spans 519-543 (GGMQGAGMQGGGMQGAGMQGGGMQG). Positions 519-590 (GGMQGAGMQG…GQSQVTPQDQ (72 aa)) are disordered. Residues 523–527 (GAGMQ) form a 2-4 repeat. A 2-5; approximate repeat occupies 528-532 (GGGMQ). Residues 533 to 537 (GAGMQ) form a 2-6 repeat. One copy of the 2-7; approximate repeat lies at 538–542 (GGGMQ). The stretch at 543-547 (GAGMQ) is one 2-8 repeat. Positions 544-557 (AGMQAGMQGASMQG) are enriched in low complexity. The stretch at 548-551 (AGMQ) is one 2-9; approximate repeat. One copy of the 2-10; approximate repeat lies at 552–556 (GASMQ). One copy of the 2-11; approximate repeat lies at 557–560 (GGMQ). The segment covering 558–574 (GMQGAGMQGASKQGGGQ) has biased composition (gly residues). The 2-12 repeat unit spans residues 561-565 (GAGMQ). Low complexity predominate over residues 575 to 584 (PSSFSPGQSQ). Phosphoserine is present on S579.

As to expression, expressed in testes, where it is restricted to pachytene spermatocytes and spermatids, and in the brain (at protein level).

Its subcellular location is the nucleus. Its function is as follows. May play a significant role in AAUAAA-independent mRNA polyadenylation in germ cells. Directly involved in the binding to pre-mRNAs. This is Cleavage stimulation factor subunit 2 tau variant (Cstf2t) from Mus musculus (Mouse).